A 313-amino-acid chain; its full sequence is L-lactate dehydrogenase 1 (313 aa).

NAD(+) is bound by residues valine 15, aspartate 36, arginine 41, and tyrosine 66. Residues glutamine 83, arginine 89, and 121 to 124 (NPVD) each bind substrate. NAD(+) is bound by residues 119-121 (ASN) and serine 144. 149-152 (DTAR) lines the substrate pocket. The beta-D-fructose 1,6-bisphosphate site is built by arginine 154 and histidine 169. Histidine 176 (proton acceptor) is an active-site residue. A Phosphotyrosine modification is found at tyrosine 218. Position 227 (threonine 227) interacts with substrate.

It belongs to the LDH/MDH superfamily. LDH family. As to quaternary structure, homotetramer.

It is found in the cytoplasm. It carries out the reaction (S)-lactate + NAD(+) = pyruvate + NADH + H(+). It functions in the pathway fermentation; pyruvate fermentation to lactate; (S)-lactate from pyruvate: step 1/1. Its activity is regulated as follows. Allosterically activated by fructose 1,6-bisphosphate (FBP). Catalyzes the conversion of lactate to pyruvate. This Listeria monocytogenes serotype 4b (strain F2365) protein is L-lactate dehydrogenase 1.